Reading from the N-terminus, the 353-residue chain is Photosystem II protein D1 (353 aa).

At threonine 2 the chain carries N-acetylthreonine. Threonine 2 is modified (phosphothreonine). A run of 3 helical transmembrane segments spans residues tyrosine 29–serine 46, histidine 118–leucine 133, and tryptophan 142–alanine 156. Chlorophyll a is bound at residue histidine 118. Tyrosine 126 serves as a coordination point for pheophytin a. [CaMn4O5] cluster is bound by residues aspartate 170 and glutamate 189. Residues phenylalanine 197 to leucine 218 form a helical membrane-spanning segment. Histidine 198 provides a ligand contact to chlorophyll a. A quinone is bound by residues histidine 215 and serine 264–phenylalanine 265. Histidine 215 lines the Fe cation pocket. Fe cation is bound at residue histidine 272. Residues phenylalanine 274–leucine 288 traverse the membrane as a helical segment. Residues histidine 332, glutamate 333, aspartate 342, and alanine 344 each coordinate [CaMn4O5] cluster. Residues glycine 345–glycine 353 constitute a propeptide that is removed on maturation.

This sequence belongs to the reaction center PufL/M/PsbA/D family. PSII is composed of 1 copy each of membrane proteins PsbA, PsbB, PsbC, PsbD, PsbE, PsbF, PsbH, PsbI, PsbJ, PsbK, PsbL, PsbM, PsbT, PsbX, PsbY, PsbZ, Psb30/Ycf12, at least 3 peripheral proteins of the oxygen-evolving complex and a large number of cofactors. It forms dimeric complexes. Requires The D1/D2 heterodimer binds P680, chlorophylls that are the primary electron donor of PSII, and subsequent electron acceptors. It shares a non-heme iron and each subunit binds pheophytin, quinone, additional chlorophylls, carotenoids and lipids. D1 provides most of the ligands for the Mn4-Ca-O5 cluster of the oxygen-evolving complex (OEC). There is also a Cl(-1) ion associated with D1 and D2, which is required for oxygen evolution. The PSII complex binds additional chlorophylls, carotenoids and specific lipids. as cofactor. Post-translationally, tyr-161 forms a radical intermediate that is referred to as redox-active TyrZ, YZ or Y-Z. In terms of processing, C-terminally processed by CTPA; processing is essential to allow assembly of the oxygen-evolving complex and thus photosynthetic growth.

It is found in the plastid. The protein localises to the chloroplast thylakoid membrane. It carries out the reaction 2 a plastoquinone + 4 hnu + 2 H2O = 2 a plastoquinol + O2. Its function is as follows. Photosystem II (PSII) is a light-driven water:plastoquinone oxidoreductase that uses light energy to abstract electrons from H(2)O, generating O(2) and a proton gradient subsequently used for ATP formation. It consists of a core antenna complex that captures photons, and an electron transfer chain that converts photonic excitation into a charge separation. The D1/D2 (PsbA/PsbD) reaction center heterodimer binds P680, the primary electron donor of PSII as well as several subsequent electron acceptors. This Morus indica (Mulberry) protein is Photosystem II protein D1.